Here is a 603-residue protein sequence, read N- to C-terminus: Insulin-like growth factor-binding protein complex acid labile subunit (603 aa).

Positions 1–23 (MALRTGSPALVVLLAFWVALGPC) are cleaved as a signal peptide. One can recognise an LRRNT domain in the interval 32 to 74 (ASADAEGPQCPVTCTCSYDDYTDELSVFCSSRNLTQLPDGIPV). 2 disulfides stabilise this stretch: C41/C47 and C45/C60. 3 N-linked (GlcNAc...) asparagine glycosylation sites follow: N64, N85, and N96. LRR repeat units follow at residues 75 to 96 (STRA…AFQN), 99 to 120 (SLDF…ALLG), 123 to 144 (NLYH…LFRH), 147 to 168 (SLAS…LFRG), 171 to 192 (HLWD…VFQG), 195 to 216 (NLHE…LLCG), 219 to 240 (ELRE…VFIH), 243 to 264 (RLQK…AFLG), 267 to 288 (ALRW…TFPG), 291 to 312 (GLHV…TFKD), 315 to 336 (FLEE…TFEG), 339 to 360 (QLEV…AFFG), 363 to 384 (NVAV…VFQG), 387 to 408 (RLHS…TFAG), 411 to 432 (GLRR…SLAG), 435 to 456 (ELLE…LFQG), 459 to 480 (QLEY…VLGP), 483 to 504 (RAFW…LFSS), and 507 to 528 (RLRY…PGLE). The N-linked (GlcNAc...) asparagine glycan is linked to N368. Residue N515 is glycosylated (N-linked (GlcNAc...) asparagine). The 69-residue stretch at 535-603 (NPWDCSCPLK…DISETLFVHC (69 aa)) folds into the LRRCT domain. Disulfide bonds link C539–C581, C541–C603, and C565–C570. N-linked (GlcNAc...) asparagine glycans are attached at residues N578 and N586.

As to quaternary structure, forms a ternary complex with IGF1 and IGFBP3.

The protein resides in the secreted. The protein localises to the extracellular space. May have an important role in regulating the access of circulating IGFs to the tissues. This Mus musculus (Mouse) protein is Insulin-like growth factor-binding protein complex acid labile subunit (Igfals).